The chain runs to 187 residues: MGDPRRRFKKTYETPNHPWIKERIEREKELCRKYGLRRKREVWKAETILRKYRRQARRLISDRTEQGAKEAVQLFNVLKKYGILKIENPTLDDVLSLTVEDILERRLQTLVFRKGLARTPRQARQLIVHGHIAVNGRVVTAPSYMVTVEEEDKISYAKNSPFNDDNHPERAKIVGLVAEETQTQETE.

An S4 RNA-binding domain is found at 105 to 174 (RRLQTLVFRK…DNHPERAKIV (70 aa)).

This sequence belongs to the universal ribosomal protein uS4 family. In terms of assembly, part of the 30S ribosomal subunit. Contacts protein S5. The interaction surface between S4 and S5 is involved in control of translational fidelity.

In terms of biological role, one of the primary rRNA binding proteins, it binds directly to 16S rRNA where it nucleates assembly of the body of the 30S subunit. Its function is as follows. With S5 and S12 plays an important role in translational accuracy. The sequence is that of Small ribosomal subunit protein uS4 from Methanocaldococcus jannaschii (strain ATCC 43067 / DSM 2661 / JAL-1 / JCM 10045 / NBRC 100440) (Methanococcus jannaschii).